The following is a 149-amino-acid chain: Large ribosomal subunit protein uL15 (149 aa).

Residues 1-11 (MSDPIKLHDLR) show a composition bias toward basic and acidic residues. Residues 1–44 (MSDPIKLHDLRPAPGAKKAKTRVGRGEASKGKTAGRGTKGTKAR) form a disordered region.

This sequence belongs to the universal ribosomal protein uL15 family. Part of the 50S ribosomal subunit.

Functionally, binds to the 23S rRNA. The protein is Large ribosomal subunit protein uL15 of Corynebacterium jeikeium (strain K411).